The following is a 512-amino-acid chain: GTPase Obg (512 aa).

Residues 2–159 (ATFVDTVTLH…GDVVLELKVV (158 aa)) form the Obg domain. An OBG-type G domain is found at 160-336 (ADVALVGYPS…LSFALAELVE (177 aa)). GTP contacts are provided by residues 166 to 173 (GYPSAGKS), 191 to 195 (FTTLH), 212 to 215 (DVPG), 288 to 291 (NKID), and 317 to 319 (STV). Mg(2+)-binding residues include Ser173 and Thr193. The OCT domain maps to 355-439 (PRAVNEKPFT…GDGIVFDWEP (85 aa)). The segment at 491 to 512 (GEAGLWADEDGTDEDASSDAKA) is disordered. Acidic residues predominate over residues 497–512 (ADEDGTDEDASSDAKA).

The protein belongs to the TRAFAC class OBG-HflX-like GTPase superfamily. OBG GTPase family. As to quaternary structure, monomer. Mg(2+) serves as cofactor.

Its subcellular location is the cytoplasm. In terms of biological role, an essential GTPase which binds GTP, GDP and possibly (p)ppGpp with moderate affinity, with high nucleotide exchange rates and a fairly low GTP hydrolysis rate. Plays a role in control of the cell cycle, stress response, ribosome biogenesis and in those bacteria that undergo differentiation, in morphogenesis control. This Clavibacter michiganensis subsp. michiganensis (strain NCPPB 382) protein is GTPase Obg.